The chain runs to 309 residues: Homoserine O-succinyltransferase (309 aa).

Residue Cys-142 is the Acyl-thioester intermediate of the active site. Lys-163 and Ser-192 together coordinate substrate. The active-site Proton acceptor is His-235. Glu-237 is an active-site residue. Position 249 (Arg-249) interacts with substrate.

This sequence belongs to the MetA family.

Its subcellular location is the cytoplasm. The enzyme catalyses L-homoserine + succinyl-CoA = O-succinyl-L-homoserine + CoA. It participates in amino-acid biosynthesis; L-methionine biosynthesis via de novo pathway; O-succinyl-L-homoserine from L-homoserine: step 1/1. In terms of biological role, transfers a succinyl group from succinyl-CoA to L-homoserine, forming succinyl-L-homoserine. This is Homoserine O-succinyltransferase from Edwardsiella ictaluri (strain 93-146).